A 440-amino-acid polypeptide reads, in one-letter code: Acyltransferase Pun1 (440 aa).

Catalysis depends on proton acceptor residues histidine 169 and aspartate 384.

This sequence belongs to the plant acyltransferase family.

The enzyme catalyses vanillylamine + (6E)-8-methylnon-6-enoyl-CoA = capsaicin + CoA + H(+). The catalysed reaction is (6E)-8-methylnon-6-enoyl-CoA + 4-hydroxy-3-methoxy-benzenemethanol = capsiate + CoA. Its function is as follows. Involved in the biosynthesis of capsaicinoids and capsinoids natural products, pungent alkaloids synthesized from phenylpropanoid intermediates in the placental tissue of chili pepper fruit acting as repellant on herbivorous mammals and conferring spiciness to hot peppers. Catalyzes the biosynthesis of capsaicin, a pungent component, and of capsiate, a non-pungent component, from vanillylamine and vanillyl alcohol, respectively. Can transfer an acyl from 8-methylnon-6-enoyl-CoA to vanillylamine forming capsaicin and CoA. The polypeptide is Acyltransferase Pun1 (Capsicum frutescens (Cayenne pepper)).